The chain runs to 367 residues: Ribosomal lysine N-methyltransferase 5 (367 aa).

A disordered region spans residues 55 to 74 (EGGRKKKRVRRRNKASSVEE). Residues 58–68 (RKKKRVRRRNK) are compositionally biased toward basic residues. S-adenosyl-L-methionine is bound by residues tryptophan 110, 170 to 172 (GAG), aspartate 192, tryptophan 256, and methionine 288.

The protein belongs to the class I-like SAM-binding methyltransferase superfamily. RKM5 family.

In terms of biological role, S-adenosyl-L-methionine-dependent protein-lysine N-methyltransferase that monomethylates 60S ribosomal protein L1 (RPL1A and RPL1B) at 'Lys-46'. The polypeptide is Ribosomal lysine N-methyltransferase 5 (RKM5) (Saccharomyces cerevisiae (strain VIN 13) (Baker's yeast)).